The primary structure comprises 525 residues: Tigger transposable element-derived protein 2 (525 aa).

Residues 1-52 enclose the HTH psq-type domain; it reads MLGKRKRVVLTIKDKLDIIKKLEEGNSFKKLSVLYGIGESTVRDIKKNKERI. 2 DNA-binding regions (H-T-H motif) span residues 28 to 48 and 100 to 132; these read FKKL…IKKN and TICA…FKQR. Residues 67–139 form the HTH CENPB-type domain; that stretch reads KRKSMKSSTY…KQRHGIPKAA (73 aa). The region spanning 168–385 is the DDE-1 domain; sequence LLPEQIYGAD…IRSNTITRAW (218 aa).

The protein belongs to the tigger transposable element derived protein family.

It is found in the nucleus. This is Tigger transposable element-derived protein 2 (Tigd2) from Mus musculus (Mouse).